The following is a 404-amino-acid chain: Argininosuccinate synthase (404 aa).

ATP-binding positions include alanine 12–serine 20 and alanine 39. L-citrulline-binding residues include tyrosine 90 and serine 95. Residue glycine 120 participates in ATP binding. L-aspartate-binding residues include threonine 122, asparagine 126, and aspartate 127. Asparagine 126 contacts L-citrulline. 5 residues coordinate L-citrulline: arginine 130, serine 181, serine 190, glutamate 266, and tyrosine 278.

The protein belongs to the argininosuccinate synthase family. Type 1 subfamily. Homotetramer.

Its subcellular location is the cytoplasm. The catalysed reaction is L-citrulline + L-aspartate + ATP = 2-(N(omega)-L-arginino)succinate + AMP + diphosphate + H(+). It functions in the pathway amino-acid biosynthesis; L-arginine biosynthesis; L-arginine from L-ornithine and carbamoyl phosphate: step 2/3. The chain is Argininosuccinate synthase from Rhodospirillum rubrum (strain ATCC 11170 / ATH 1.1.1 / DSM 467 / LMG 4362 / NCIMB 8255 / S1).